Here is a 309-residue protein sequence, read N- to C-terminus: Probable copper-dependent oxygenase clz3 (309 aa).

2 N-linked (GlcNAc...) asparagine glycosylation sites follow: asparagine 9 and asparagine 249. The chain crosses the membrane as a helical span at residues 257–277; the sequence is FAVPLAAIAFIALIISGGYVI.

It belongs to the clz3 oxygenase family.

Its subcellular location is the membrane. The protein operates within secondary metabolite biosynthesis. Functionally, probable copper-dependent oxygenase; part of the gene cluster that mediates the biosynthesis of squalestatin S1 (SQS1, also known as zaragozic acid A), a heavily oxidized fungal polyketide that offers potent cholesterol lowering activity by targeting squalene synthase (SS). SQS1 is composed of a 2,8-dioxobicyclic[3.2.1]octane-3,4,5-tricarboxyclic acid core that is connected to two lipophilic polyketide arms. These initial steps feature the priming of an unusual benzoic acid starter unit onto the highly reducing polyketide synthase clz14, followed by oxaloacetate extension and product release to generate a tricarboxylic acid containing product. The phenylalanine ammonia lyase (PAL) clz10 and the acyl-CoA ligase clz12 are involved in transforming phenylalanine into benzoyl-CoA. The citrate synthase-like protein clz17 is involved in connecting the C-alpha-carbons of the hexaketide chain and oxaloacetate to afford the tricarboxylic acid unit. The potential hydrolytic enzymes, clz11 and clz13, are in close proximity to pks2 and may participate in product release. On the other side, the tetraketide arm is synthesized by a the squalestatin tetraketide synthase clz2 and enzymatically esterified to the core in the last biosynthetic step, by the acetyltransferase clz6. The biosynthesis of the tetraketide must involve 3 rounds of chain extension. After the first and second rounds methyl-transfer occurs, and in all rounds of extension the ketoreductase and dehydratase are active. The enoyl reductase and C-MeT of clz2 are not active in the final round of extension. The acetyltransferase clz6 appears to have a broad substrate selectivity for its acyl CoA substrate, allowing the in vitro synthesis of novel squalestatins. The biosynthesis of SQS1 requires several oxidative steps likely performed by oxidoreductases clz3, clz15 and clz16. Finally, in support of the identification of the cluster as being responsible for SQS1 production, the cluster contains a gene encoding a putative squalene synthase (SS) clz20, suggesting a likely mechanism for self-resistance. In Cochliobolus lunatus (Filamentous fungus), this protein is Probable copper-dependent oxygenase clz3.